A 346-amino-acid chain; its full sequence is Anthranilate phosphoribosyltransferase (346 aa).

5-phospho-alpha-D-ribose 1-diphosphate-binding positions include Gly88, 91–92, Thr96, 98–101, 116–124, and Ala128; these read GD, NIST, and KHGNRAVSS. Gly88 is an anthranilate binding site. Residue Ser100 coordinates Mg(2+). Asn119 serves as a coordination point for anthranilate. Arg174 lines the anthranilate pocket. Residues Asp233 and Glu234 each contribute to the Mg(2+) site.

It belongs to the anthranilate phosphoribosyltransferase family. Homodimer. Requires Mg(2+) as cofactor.

It catalyses the reaction N-(5-phospho-beta-D-ribosyl)anthranilate + diphosphate = 5-phospho-alpha-D-ribose 1-diphosphate + anthranilate. The protein operates within amino-acid biosynthesis; L-tryptophan biosynthesis; L-tryptophan from chorismate: step 2/5. Functionally, catalyzes the transfer of the phosphoribosyl group of 5-phosphorylribose-1-pyrophosphate (PRPP) to anthranilate to yield N-(5'-phosphoribosyl)-anthranilate (PRA). This Paramagnetospirillum magneticum (strain ATCC 700264 / AMB-1) (Magnetospirillum magneticum) protein is Anthranilate phosphoribosyltransferase.